A 585-amino-acid polypeptide reads, in one-letter code: Lipoprotein LpqB (585 aa).

The N-terminal stretch at 1 to 17 (MGRKLLGLLMLAVLLAG) is a signal peptide. Cysteine 18 is lipidated: N-palmitoyl cysteine. The S-diacylglycerol cysteine moiety is linked to residue cysteine 18. Disordered regions lie at residues 24–46 (SSAPQAIGTVERPAPSNLPKPTP) and 560–585 (PSADGQQGWSEVPGLTVPGAAPVLPG).

The protein belongs to the LpqB lipoprotein family.

It is found in the cell membrane. The sequence is that of Lipoprotein LpqB from Mycobacterium paratuberculosis.